Here is a 610-residue protein sequence, read N- to C-terminus: Preterminal protein (610 aa).

The disordered stretch occupies residues 288-379 (TLRSGTQTGL…ESFSDDVGLS (92 aa)). The Nuclear localization signal signature appears at 328–337 (SLPIRRRRRR). Basic residues predominate over residues 331–340 (IRRRRRRGTR). The segment covering 341-350 (RQVEREDSVR) has biased composition (basic and acidic residues). O-(5'-phospho-DNA)-serine is present on Ser-549.

It belongs to the adenoviridae terminal protein family. As to quaternary structure, heterodimer with the polymerase; this heterodimer binds to bp 9 to 18 of the genome. Interacts with host POU2F1; POU2F1 binds to the auxiliary sequences in the inverted terminal repeats and tethers the pTP-POL heterodimer to the origin DNA thereby participating in the assembly of the pre-initiation complex (POL-TP-DBP-NFIA-POU2F1). Preterminal protein is used to replicate viral genome, upon genomic encapsidation it is processed first into iTP and finally into TP by adenovirus protease.

The protein localises to the host nucleus matrix. In terms of biological role, protein covalently bound to the viral DNA that acts as a primer for viral genomic replication by DNA strand displacement. Assembles on the viral origin of replication in an initiation complex with viral polymerase, DBP, host NFIA and host POU2F1/OCT1. During initiation, the polymerase covalently couples the first dCTP with Ser-580 of pTP. The terminal protein stimulates the template activity over 20 fold compared to protein-free templates. Neo-synthesized viral genomes are linked to two preterminal proteins, one for each 5' end. These new genomes are encapsidated in the nucleus, and during capsid maturation by viral protease, preterminal protein is first cleaved into intermediary (iTP), then into mature TP. May play a role in host nuclear matrix localization of genomic DNA. The protein is Preterminal protein of Snake adenovirus serotype 1 (SnAdV-1).